The chain runs to 103 residues: Urease subunit beta (103 aa).

It belongs to the urease beta subunit family. Heterotrimer of UreA (gamma), UreB (beta) and UreC (alpha) subunits. Three heterotrimers associate to form the active enzyme.

Its subcellular location is the cytoplasm. The catalysed reaction is urea + 2 H2O + H(+) = hydrogencarbonate + 2 NH4(+). The protein operates within nitrogen metabolism; urea degradation; CO(2) and NH(3) from urea (urease route): step 1/1. This Streptomyces avermitilis (strain ATCC 31267 / DSM 46492 / JCM 5070 / NBRC 14893 / NCIMB 12804 / NRRL 8165 / MA-4680) protein is Urease subunit beta.